The primary structure comprises 431 residues: Tol-Pal system protein TolB (431 aa).

The N-terminal stretch at 1-24 (MMKFLTRMLSAFAVLFFAISTAQA) is a signal peptide. Residues 318–340 (QVYRMSSSGGAASPVGGRGSAQI) form a disordered region. Positions 323-332 (SSSGGAASPV) are enriched in low complexity.

The protein belongs to the TolB family. In terms of assembly, the Tol-Pal system is composed of five core proteins: the inner membrane proteins TolA, TolQ and TolR, the periplasmic protein TolB and the outer membrane protein Pal. They form a network linking the inner and outer membranes and the peptidoglycan layer.

The protein localises to the periplasm. In terms of biological role, part of the Tol-Pal system, which plays a role in outer membrane invagination during cell division and is important for maintaining outer membrane integrity. This is Tol-Pal system protein TolB from Mannheimia succiniciproducens (strain KCTC 0769BP / MBEL55E).